Consider the following 944-residue polypeptide: Translation initiation factor IF-2 (944 aa).

2 disordered regions span residues isoleucine 61–glutamine 157 and threonine 173–isoleucine 281. The span at threonine 132 to serine 150 shows a compositional bias: polar residues. Residues serine 175–asparagine 185 show a composition bias toward low complexity. Basic and acidic residues predominate over residues alanine 186–histidine 203. Residues glutamate 204–isoleucine 215 show a composition bias toward basic residues. Residues glutamate 244–lysine 259 show a composition bias toward basic and acidic residues. One can recognise a tr-type G domain in the interval glutamate 443–lysine 612. Positions glycine 452–threonine 459 are G1. Glycine 452–threonine 459 provides a ligand contact to GTP. The segment at glycine 477–histidine 481 is G2. The segment at aspartate 498 to glycine 501 is G3. GTP contacts are provided by residues aspartate 498 to histidine 502 and asparagine 552 to aspartate 555. The tract at residues asparagine 552 to aspartate 555 is G4. The segment at serine 588–lysine 590 is G5.

The protein belongs to the TRAFAC class translation factor GTPase superfamily. Classic translation factor GTPase family. IF-2 subfamily.

The protein localises to the cytoplasm. One of the essential components for the initiation of protein synthesis. Protects formylmethionyl-tRNA from spontaneous hydrolysis and promotes its binding to the 30S ribosomal subunits. Also involved in the hydrolysis of GTP during the formation of the 70S ribosomal complex. The sequence is that of Translation initiation factor IF-2 (infB) from Helicobacter pylori (strain ATCC 700392 / 26695) (Campylobacter pylori).